Consider the following 798-residue polypeptide: Protocadherin beta-10 (798 aa).

Residues 1–26 form the signal peptide; that stretch reads MAVRELCFSRQRQVLFLFLFWGVSLA. The Extracellular segment spans residues 27–690; it reads GSGFGRYSVT…AQADLLTVYL (664 aa). Cadherin domains lie at 35 to 133, 138 to 242, 247 to 347, 352 to 451, and 456 to 561; these read VTEE…APVF, TVLK…APQF, YETQ…PPEL, FSNS…APAF, and YTLF…SPFV. A glycan (N-linked (GlcNAc...) asparagine) is linked at asparagine 169. 2 N-linked (GlcNAc...) asparagine glycosylation sites follow: asparagine 418 and asparagine 436. N-linked (GlcNAc...) asparagine glycosylation is present at asparagine 567. In terms of domain architecture, Cadherin 6 spans 568–671; sequence GSAPCTELVP…LVDGFSQPYL (104 aa). Residues 691-711 traverse the membrane as a helical segment; sequence VVALASVSSLFLFSVLLFVAV. The Cytoplasmic portion of the chain corresponds to 712–798; it reads RLCRRSRAAS…FRNSFGFNIQ (87 aa).

The protein localises to the cell membrane. Functionally, potential calcium-dependent cell-adhesion protein. May be involved in the establishment and maintenance of specific neuronal connections in the brain. This is Protocadherin beta-10 (PCDHB10) from Pan troglodytes (Chimpanzee).